The primary structure comprises 37 residues: Cytochrome b6-f complex subunit 5 (37 aa).

The chain crosses the membrane as a helical span at residues L5 to A25.

This sequence belongs to the PetG family. In terms of assembly, the 4 large subunits of the cytochrome b6-f complex are cytochrome b6, subunit IV (17 kDa polypeptide, PetD), cytochrome f and the Rieske protein, while the 4 small subunits are PetG, PetL, PetM and PetN. The complex functions as a dimer.

It is found in the plastid. Its subcellular location is the chloroplast thylakoid membrane. Component of the cytochrome b6-f complex, which mediates electron transfer between photosystem II (PSII) and photosystem I (PSI), cyclic electron flow around PSI, and state transitions. PetG is required for either the stability or assembly of the cytochrome b6-f complex. The polypeptide is Cytochrome b6-f complex subunit 5 (Welwitschia mirabilis (Tree tumbo)).